The sequence spans 369 residues: MNSELKPGLDLLGDPIVLTQRLVDIPSPSGQEKQIADEIEDALRNLNLPGVEVFRFNNNVLARTNRGLASRVMLAGHIDTVPIADNLPSRVEDGIMYGCGTVDMKSGLAVYLHTFATLATSTELKHDLTLIAYECEEVADHLNGLGHIRDEHPEWLAADLALLGEPTGGWIEAGCQGNLRIKVTAHGVRAHSARSWLGDNAMHKLSPIISKVAAYKAAEVNIDGLTYREGLNIVFCESGVANNVIPDLAWMNLNFRFAPNRDLNEAIEHVVETLELDGQDGIEWAVEDGAGGALPGLGQQVTSGLIDAVGREKIRAKFGWTDVSRFSAMGIPALNFGAGDPSFAHKRDEQCPVEQITDVAAILKQYLSE.

H77 is a binding site for Zn(2+). Residue D79 is part of the active site. D103 is a Zn(2+) binding site. E136 functions as the Proton acceptor in the catalytic mechanism. Residues E137, E165, and H345 each contribute to the Zn(2+) site.

The protein belongs to the peptidase M20A family. Requires Zn(2+) as cofactor. Co(2+) serves as cofactor.

It carries out the reaction N-succinyl-(2S,6S)-2,6-diaminopimelate + H2O = (2S,6S)-2,6-diaminopimelate + succinate. It participates in amino-acid biosynthesis; L-lysine biosynthesis via DAP pathway; LL-2,6-diaminopimelate from (S)-tetrahydrodipicolinate (succinylase route): step 3/3. The chain is Succinyl-diaminopimelate desuccinylase (dapE) from Corynebacterium glutamicum (strain ATCC 13032 / DSM 20300 / JCM 1318 / BCRC 11384 / CCUG 27702 / LMG 3730 / NBRC 12168 / NCIMB 10025 / NRRL B-2784 / 534).